Reading from the N-terminus, the 285-residue chain is Integrin alpha-1 (285 aa).

Over 1–285 (ENMTFGTTLV…HYSQDWVMLG (285 aa)) the chain is Extracellular. N-linked (GlcNAc...) asparagine glycans are attached at residues asparagine 2, asparagine 40, asparagine 208, and asparagine 232. The VWFA domain occupies 66–279 (IVLDGSNSIY…QAGFSAHYSQ (214 aa)).

The protein belongs to the integrin alpha chain family. Heterodimer of an alpha and a beta subunit. Alpha-1 associates with beta-1.

The protein resides in the membrane. Functionally, integrin alpha-1/beta-1 is a receptor for laminin and collagen. It recognizes the proline-hydroxylated sequence G-F-P-G-E-R in collagen. Involved in anchorage-dependent, negative regulation of EGF-stimulated cell growth. The protein is Integrin alpha-1 (ITGA1) of Gallus gallus (Chicken).